A 369-amino-acid polypeptide reads, in one-letter code: Putative 2-aminoethylphosphonate import ATP-binding protein PhnT (369 aa).

Residues 19-250 enclose the ABC transporter domain; it reads IVLDSLRVAY…PPNRFASEFL (232 aa). 51-58 provides a ligand contact to ATP; sequence GPSGSGKT.

The protein belongs to the ABC transporter superfamily. 2-aminoethylphosphonate importer (TC 3.A.1.11.5) family.

It is found in the cell inner membrane. Functionally, probably part of the PhnSTUV complex (TC 3.A.1.11.5) involved in 2-aminoethylphosphonate import. Probably responsible for energy coupling to the transport system. This chain is Putative 2-aminoethylphosphonate import ATP-binding protein PhnT (phnT), found in Salmonella choleraesuis (strain SC-B67).